A 740-amino-acid polypeptide reads, in one-letter code: Inhibitor of nuclear factor kappa-B kinase subunit alpha (740 aa).

The 288-residue stretch at 15-302 folds into the Protein kinase domain; it reads WEMRERLGTG…LTLKQPRCFV (288 aa). ATP is bound by residues 21–29 and K44; that span reads LGTGGFGNV. Position 23 is a phosphothreonine; by PKB/AKT1 (T23). D144 functions as the Proton acceptor in the catalytic mechanism. Position 176 is a phosphoserine; by MAP3K14 (S176). The residue at position 180 (S180) is a Phosphoserine. Residues 455–476 form a leucine-zipper region; sequence LLRYNTNLTKMKNTLISASQQL. The tract at residues 733–738 is NEMO-binding; it reads LDWSWL.

Belongs to the protein kinase superfamily. Ser/Thr protein kinase family. I-kappa-B kinase subfamily. In terms of assembly, component of the I-kappa-B-kinase (IKK) core complex consisting of CHUK, IKBKB and IKBKG; probably four alpha/CHUK-beta/IKBKB dimers are associated with four gamma/IKBKG subunits. The IKK core complex seems to associate with regulatory or adapter proteins to form a IKK-signalosome holo-complex. The IKK complex associates with TERF2IP/RAP1, leading to promote IKK-mediated phosphorylation of RELA/p65. Part of a complex composed of NCOA2, NCOA3, CHUK/IKKA, IKBKB, IKBKG and CREBBP. Part of a 70-90 kDa complex at least consisting of CHUK/IKKA, IKBKB, NFKBIA, RELA, ELP1 and MAP3K14. Directly interacts with TRPC4AP. May interact with TRAF2. Interacts with NALP2. May interact with MAVS/IPS1. Interacts with ARRB1 and ARRB2. Interacts with NLRC5; prevents CHUK phosphorylation and kinase activity. Interacts with PIAS1; this interaction induces PIAS1 phosphorylation. Interacts with ZNF268 isoform 2; the interaction is further increased in a TNF-alpha-dependent manner. Interacts with IFIT5; the interaction synergizes the recruitment of IKK to MAP3K7 and enhances IKK phosphorylation. Interacts with LRRC14. Directly interacts with DDX3X after the physiological activation of the TLR7 and TLR8 pathways; this interaction enhances CHUK autophosphorylation. In terms of processing, ubiquitinated by TRIM56 via 'Lys-63'-linked ubiquitination, promoting activation of CHUK/IKKA. Phosphorylated by MAP3K14/NIK, AKT and to a lesser extent by MEKK1, and dephosphorylated by PP2A. Autophosphorylated.

The protein resides in the cytoplasm. The protein localises to the nucleus. It catalyses the reaction L-seryl-[I-kappa-B protein] + ATP = O-phospho-L-seryl-[I-kappa-B protein] + ADP + H(+). Activated when phosphorylated and inactivated when dephosphorylated. Serine kinase that plays an essential role in the NF-kappa-B signaling pathway which is activated by multiple stimuli such as inflammatory cytokines, bacterial or viral products, DNA damages or other cellular stresses. Acts as a part of the canonical IKK complex in the conventional pathway of NF-kappa-B activation and phosphorylates inhibitors of NF-kappa-B on serine residues. These modifications allow polyubiquitination of the inhibitors and subsequent degradation by the proteasome. In turn, free NF-kappa-B is translocated into the nucleus and activates the transcription of hundreds of genes involved in immune response, growth control, or protection against apoptosis. Negatively regulates the pathway by phosphorylating the scaffold protein TAXBP1 and thus promoting the assembly of the A20/TNFAIP3 ubiquitin-editing complex (composed of A20/TNFAIP3, TAX1BP1, and the E3 ligases ITCH and RNF11). Therefore, CHUK plays a key role in the negative feedback of NF-kappa-B canonical signaling to limit inflammatory gene activation. As part of the non-canonical pathway of NF-kappa-B activation, the MAP3K14-activated CHUK/IKKA homodimer phosphorylates NFKB2/p100 associated with RelB, inducing its proteolytic processing to NFKB2/p52 and the formation of NF-kappa-B RelB-p52 complexes. In turn, these complexes regulate genes encoding molecules involved in B-cell survival and lymphoid organogenesis. Also participates in the negative feedback of the non-canonical NF-kappa-B signaling pathway by phosphorylating and destabilizing MAP3K14/NIK. Within the nucleus, phosphorylates CREBBP and consequently increases both its transcriptional and histone acetyltransferase activities. Modulates chromatin accessibility at NF-kappa-B-responsive promoters by phosphorylating histones H3 at 'Ser-10' that are subsequently acetylated at 'Lys-14' by CREBBP. Additionally, phosphorylates the CREBBP-interacting protein NCOA3. Also phosphorylates FOXO3 and may regulate this pro-apoptotic transcription factor. Interacts with SASH1. Phosphorylates RIPK1 at 'Ser-25' which represses its kinase activity and consequently prevents TNF-mediated RIPK1-dependent cell death. Phosphorylates AMBRA1 following mitophagy induction, promoting AMBRA1 interaction with ATG8 family proteins and its mitophagic activity. The polypeptide is Inhibitor of nuclear factor kappa-B kinase subunit alpha (CHUK) (Bos taurus (Bovine)).